Here is a 33-residue protein sequence, read N- to C-terminus: Ice-structuring protein SS-3 (33 aa).

The protein belongs to the type-I AFP family.

Its function is as follows. Antifreeze proteins lower the blood freezing point. The chain is Ice-structuring protein SS-3 from Myoxocephalus scorpius (Shorthorn sculpin).